Consider the following 300-residue polypeptide: Probable acetyltransferase Rv3034c (300 aa).

The signal sequence occupies residues 1–25; the sequence is MNVLSLGSSSGVVWGRVPITAPAGA.

The protein belongs to the transferase hexapeptide repeat family.

Its function is as follows. May be involved in the biosynthesis of 6-O-methylglucosyl-containing lipopolysaccharides (MGLP). Regulates host peroxisome homeostasis in response to intracellular redox levels to favor mycobacterial infection in macrophage. Induces the expression of host peroxisome biogenesis and proliferation factors as well as peroxisome associated enzymes. Inhibits the induction of host pexophagy mechanism by down-regulating the expression of pexophagy associated proteins and adapter molecules in infected macrophages. However, during increased oxidative stress conditions, it induces degradation of dysfunctional and damaged peroxisomes. Regulation of peroxisome biogenesis and degradation is dependent upon host p-mTORC1 mediated signaling pathway. The sequence is that of Probable acetyltransferase Rv3034c from Mycobacterium tuberculosis (strain ATCC 25618 / H37Rv).